The following is a 198-amino-acid chain: V-type ATP synthase subunit E (198 aa).

It belongs to the V-ATPase E subunit family.

Functionally, produces ATP from ADP in the presence of a proton gradient across the membrane. The chain is V-type ATP synthase subunit E from Clostridium novyi (strain NT).